The primary structure comprises 334 residues: Cytoskeleton protein RodZ (334 aa).

Residues M1–G111 are Cytoplasmic-facing. The HTH cro/C1-type domain maps to L19–L71. A DNA-binding region (H-T-H motif) is located at residues Q30–E49. A helical; Signal-anchor for type II membrane protein transmembrane segment spans residues W112–W132. Topologically, residues W133 to Q334 are periplasmic. Residues A152–V210 form a disordered region. Polar residues predominate over residues G161–D175. The span at T176–V210 shows a compositional bias: low complexity.

It belongs to the RodZ family.

It is found in the cell inner membrane. Cytoskeletal protein that is involved in cell-shape control through regulation of the length of the long axis. This is Cytoskeleton protein RodZ from Salmonella gallinarum (strain 287/91 / NCTC 13346).